We begin with the raw amino-acid sequence, 452 residues long: UDP-N-acetylmuramoylalanine--D-glutamate ligase (452 aa).

Gly119–Thr125 provides a ligand contact to ATP.

The protein belongs to the MurCDEF family.

Its subcellular location is the cytoplasm. It carries out the reaction UDP-N-acetyl-alpha-D-muramoyl-L-alanine + D-glutamate + ATP = UDP-N-acetyl-alpha-D-muramoyl-L-alanyl-D-glutamate + ADP + phosphate + H(+). It participates in cell wall biogenesis; peptidoglycan biosynthesis. In terms of biological role, cell wall formation. Catalyzes the addition of glutamate to the nucleotide precursor UDP-N-acetylmuramoyl-L-alanine (UMA). This is UDP-N-acetylmuramoylalanine--D-glutamate ligase from Streptococcus pyogenes serotype M28 (strain MGAS6180).